The chain runs to 509 residues: 2,3-bisphosphoglycerate-independent phosphoglycerate mutase (509 aa).

Aspartate 11 serves as a coordination point for Mn(2+). Position 35 is a phosphotyrosine (tyrosine 35). A Mn(2+)-binding site is contributed by serine 61. The active-site Phosphoserine intermediate is serine 61. Substrate contacts are provided by residues histidine 122, 152 to 153 (RD), arginine 184, arginine 190, 260 to 263 (RPDR), and lysine 335. Residues aspartate 402, histidine 406, aspartate 443, histidine 444, and histidine 461 each coordinate Mn(2+).

It belongs to the BPG-independent phosphoglycerate mutase family. Monomer. Mn(2+) serves as cofactor.

The enzyme catalyses (2R)-2-phosphoglycerate = (2R)-3-phosphoglycerate. It participates in carbohydrate degradation; glycolysis; pyruvate from D-glyceraldehyde 3-phosphate: step 3/5. Its function is as follows. Essential for rapid growth and for sporulation. Catalyzes the interconversion of 2-phosphoglycerate and 3-phosphoglycerate. The chain is 2,3-bisphosphoglycerate-independent phosphoglycerate mutase from Bacillus cereus (strain ATCC 14579 / DSM 31 / CCUG 7414 / JCM 2152 / NBRC 15305 / NCIMB 9373 / NCTC 2599 / NRRL B-3711).